The primary structure comprises 344 residues: N-acetyl-gamma-glutamyl-phosphate reductase (344 aa).

C149 is a catalytic residue.

This sequence belongs to the NAGSA dehydrogenase family. Type 1 subfamily.

It localises to the cytoplasm. The catalysed reaction is N-acetyl-L-glutamate 5-semialdehyde + phosphate + NADP(+) = N-acetyl-L-glutamyl 5-phosphate + NADPH + H(+). Its pathway is amino-acid biosynthesis; L-arginine biosynthesis; N(2)-acetyl-L-ornithine from L-glutamate: step 3/4. Catalyzes the NADPH-dependent reduction of N-acetyl-5-glutamyl phosphate to yield N-acetyl-L-glutamate 5-semialdehyde. The sequence is that of N-acetyl-gamma-glutamyl-phosphate reductase from Acidithiobacillus ferrooxidans (strain ATCC 23270 / DSM 14882 / CIP 104768 / NCIMB 8455) (Ferrobacillus ferrooxidans (strain ATCC 23270)).